We begin with the raw amino-acid sequence, 635 residues long: Threonine--tRNA ligase (635 aa).

One can recognise a TGS domain in the interval 1-61 (MIKITLKDGK…HKDSSLEILT (61 aa)). The tract at residues 242 to 532 (DHRKLGKELD…LIEQYAGAFP (291 aa)) is catalytic. Residues Cys-333, His-384, and His-509 each coordinate Zn(2+).

The protein belongs to the class-II aminoacyl-tRNA synthetase family. Homodimer. Requires Zn(2+) as cofactor.

The protein localises to the cytoplasm. It catalyses the reaction tRNA(Thr) + L-threonine + ATP = L-threonyl-tRNA(Thr) + AMP + diphosphate + H(+). Functionally, catalyzes the attachment of threonine to tRNA(Thr) in a two-step reaction: L-threonine is first activated by ATP to form Thr-AMP and then transferred to the acceptor end of tRNA(Thr). Also edits incorrectly charged L-seryl-tRNA(Thr). The polypeptide is Threonine--tRNA ligase (Clostridium botulinum (strain Kyoto / Type A2)).